A 233-amino-acid polypeptide reads, in one-letter code: Methylthioribulose-1-phosphate dehydratase (233 aa).

Cys91 serves as a coordination point for substrate. His108 and His110 together coordinate Zn(2+). Glu137 acts as the Proton donor/acceptor in catalysis. His194 serves as a coordination point for Zn(2+).

This sequence belongs to the aldolase class II family. MtnB subfamily. Zn(2+) serves as cofactor.

The protein resides in the cytoplasm. It catalyses the reaction 5-(methylsulfanyl)-D-ribulose 1-phosphate = 5-methylsulfanyl-2,3-dioxopentyl phosphate + H2O. The protein operates within amino-acid biosynthesis; L-methionine biosynthesis via salvage pathway; L-methionine from S-methyl-5-thio-alpha-D-ribose 1-phosphate: step 2/6. In terms of biological role, catalyzes the dehydration of methylthioribulose-1-phosphate (MTRu-1-P) into 2,3-diketo-5-methylthiopentyl-1-phosphate (DK-MTP-1-P). This is Methylthioribulose-1-phosphate dehydratase from Phaeosphaeria nodorum (strain SN15 / ATCC MYA-4574 / FGSC 10173) (Glume blotch fungus).